The following is a 173-amino-acid chain: Coordinator of PRMT5 and differentiation stimulator (173 aa).

An N-acetylmethionine modification is found at methionine 1. The tract at residues 1–70 is disordered; that stretch reads MDPQAATGRG…EGPSSEEEGF (70 aa). Phosphoserine is present on residues serine 64 and serine 65.

In terms of assembly, interacts with PRMT5. Interacts with histone H4; specifically interacts with the N-terminus of histone H4 but not with histone H3. Interacts with CBFB. Found in a complex with PRMT5, RUNX1 and CBFB.

The protein localises to the nucleus. In terms of biological role, histone-binding protein required for histone H4 methyltransferase activity of PRMT5. Specifically required for histone H4 'Arg-3' methylation mediated by PRMT5, but not histone H3 'Arg-8' methylation, suggesting that it modulates the substrate specificity of PRMT5. Specifically interacts with the N-terminus of histone H4 but not with histone H3, suggesting that it acts by promoting the association between histone H4 and PRMT5. Involved in CCNE1 promoter repression. Plays a role in muscle cell differentiation by modulating the recruitment of PRMT5 to the promoter of genes involved in the coordination between cell cycle exit and muscle differentiation. In Mus musculus (Mouse), this protein is Coordinator of PRMT5 and differentiation stimulator (Coprs).